Consider the following 1196-residue polypeptide: DNA-directed RNA polymerase subunit beta (1196 aa).

The protein belongs to the RNA polymerase beta chain family. As to quaternary structure, the RNAP catalytic core consists of 2 alpha, 1 beta, 1 beta' and 1 omega subunit. When a sigma factor is associated with the core the holoenzyme is formed, which can initiate transcription.

It carries out the reaction RNA(n) + a ribonucleoside 5'-triphosphate = RNA(n+1) + diphosphate. Functionally, DNA-dependent RNA polymerase catalyzes the transcription of DNA into RNA using the four ribonucleoside triphosphates as substrates. The protein is DNA-directed RNA polymerase subunit beta of Lactococcus lactis subsp. cremoris (strain SK11).